We begin with the raw amino-acid sequence, 403 residues long: NADH-quinone oxidoreductase subunit D (403 aa).

This sequence belongs to the complex I 49 kDa subunit family. As to quaternary structure, NDH-1 is composed of 14 different subunits. Subunits NuoB, C, D, E, F, and G constitute the peripheral sector of the complex.

The protein resides in the cell inner membrane. It carries out the reaction a quinone + NADH + 5 H(+)(in) = a quinol + NAD(+) + 4 H(+)(out). In terms of biological role, NDH-1 shuttles electrons from NADH, via FMN and iron-sulfur (Fe-S) centers, to quinones in the respiratory chain. The immediate electron acceptor for the enzyme in this species is believed to be ubiquinone. Couples the redox reaction to proton translocation (for every two electrons transferred, four hydrogen ions are translocated across the cytoplasmic membrane), and thus conserves the redox energy in a proton gradient. This Ruegeria sp. (strain TM1040) (Silicibacter sp.) protein is NADH-quinone oxidoreductase subunit D.